Reading from the N-terminus, the 361-residue chain is MTRAFNFSAGPATLPESVLRQAQAEMVEWNGVGASIVEISHRSADFMAVAAAAEADLRSLLSIPDDYAVLFTAGGATTIQALLPLNFAAPGQAADYVITGHWGKTAIKQAATYVDARIAADAQADGFVDIPAAASWTLSPHSAYVHITANETIHGVEFRDTPDVGTLPLFADFSSSIASEPLDISRYGLIYAGAQKNLGPVGISVVIVRRDLLERAGQPRADIFNYASQVARDSMLNTPPTWNWYLLGLTVKWMLEQGGVQEFARRNAEKAALVYGAIDGSGGFYRNLIKPAVRSRMNIPFFLPDERLDALFVSESKAAGLLALKGHKAVGGIRASLYNAMPVAGAQALAAFMHDFQQRHG.

Residue arginine 42 coordinates L-glutamate. Pyridoxal 5'-phosphate is bound by residues 76–77, tryptophan 102, threonine 152, aspartate 172, and glutamine 195; that span reads AT. Lysine 196 is modified (N6-(pyridoxal phosphate)lysine). Position 237-238 (237-238) interacts with pyridoxal 5'-phosphate; that stretch reads NT.

Belongs to the class-V pyridoxal-phosphate-dependent aminotransferase family. SerC subfamily. In terms of assembly, homodimer. Pyridoxal 5'-phosphate serves as cofactor.

The protein resides in the cytoplasm. The catalysed reaction is O-phospho-L-serine + 2-oxoglutarate = 3-phosphooxypyruvate + L-glutamate. It catalyses the reaction 4-(phosphooxy)-L-threonine + 2-oxoglutarate = (R)-3-hydroxy-2-oxo-4-phosphooxybutanoate + L-glutamate. It participates in amino-acid biosynthesis; L-serine biosynthesis; L-serine from 3-phospho-D-glycerate: step 2/3. It functions in the pathway cofactor biosynthesis; pyridoxine 5'-phosphate biosynthesis; pyridoxine 5'-phosphate from D-erythrose 4-phosphate: step 3/5. Catalyzes the reversible conversion of 3-phosphohydroxypyruvate to phosphoserine and of 3-hydroxy-2-oxo-4-phosphonooxybutanoate to phosphohydroxythreonine. This chain is Phosphoserine aminotransferase, found in Xanthomonas axonopodis pv. citri (strain 306).